Reading from the N-terminus, the 283-residue chain is 2-dehydro-3-deoxyphosphooctonate aldolase (283 aa).

The protein belongs to the KdsA family.

The protein resides in the cytoplasm. It carries out the reaction D-arabinose 5-phosphate + phosphoenolpyruvate + H2O = 3-deoxy-alpha-D-manno-2-octulosonate-8-phosphate + phosphate. The protein operates within carbohydrate biosynthesis; 3-deoxy-D-manno-octulosonate biosynthesis; 3-deoxy-D-manno-octulosonate from D-ribulose 5-phosphate: step 2/3. It participates in bacterial outer membrane biogenesis; lipopolysaccharide biosynthesis. This Methylococcus capsulatus (strain ATCC 33009 / NCIMB 11132 / Bath) protein is 2-dehydro-3-deoxyphosphooctonate aldolase.